The primary structure comprises 278 residues: Non-heme chloroperoxidase (278 aa).

In terms of domain architecture, AB hydrolase-1 spans Pro-24–Gly-259. Active-site residues include Ser-97, Asp-229, and His-258.

It belongs to the AB hydrolase superfamily. Bacterial non-heme haloperoxidase / perhydrolase family. In terms of assembly, homodimer.

Chlorinates and brominates suitable organic compounds. Involved in the biosynthesis of the antibiotic pyrrolnitrin. The protein is Non-heme chloroperoxidase (cpo) of Burkholderia pyrrocinia (Pseudomonas pyrrocinia).